Reading from the N-terminus, the 300-residue chain is MNKQKVCPACESAELIYDPERGEIVCAKCGYVIEENIIDMGPEWRAFDASQRERRSRTGAPESILLHDKGLSTEIGIDRSLSGLMREKMYRLRKWQSRLRVSDAAERNLAFALSELDRITAQLKLPRHVEEEAARLYREAVRKGLIRGRSIESVMAACVYAACRLLKVPRTLDEIADIARVDKKEIGRSYRFIARNLNLTPKKLFVKPTDYVNKFADELGLSEKVRRRAIEILDEAYKRGLTSGKSPAGLVAAALYIASLLEGEKRTQREVAEVARVTEVTVRNRYKELVEKLKIKVPIA.

A TFIIB-type zinc finger spans residues 2-34 (NKQKVCPACESAELIYDPERGEIVCAKCGYVIE). Residues Cys7, Cys10, Cys26, and Cys29 each coordinate Zn(2+). Repeat copies occupy residues 114–197 (SELD…ARNL) and 210–291 (DYVN…ELVE).

It belongs to the TFIIB family.

Stabilizes TBP binding to an archaeal box-A promoter. Also responsible for recruiting RNA polymerase II to the pre-initiation complex (DNA-TBP-TFIIB). In Pyrococcus furiosus (strain ATCC 43587 / DSM 3638 / JCM 8422 / Vc1), this protein is Transcription initiation factor IIB.